A 158-amino-acid polypeptide reads, in one-letter code: EOLA-like protein (158 aa).

One can recognise an ASCH domain in the interval 6–92 (LSFRQPYAGF…IAGLVDIGET (87 aa)).

The protein belongs to the EOLA family.

In Pongo abelii (Sumatran orangutan), this protein is EOLA-like protein.